Here is a 296-residue protein sequence, read N- to C-terminus: Phosphatidylserine decarboxylase proenzyme (296 aa).

Catalysis depends on charge relay system; for autoendoproteolytic cleavage activity residues D113, H169, and S256. S256 (schiff-base intermediate with substrate; via pyruvic acid; for decarboxylase activity) is an active-site residue. Pyruvic acid (Ser); by autocatalysis is present on S256.

It belongs to the phosphatidylserine decarboxylase family. PSD-B subfamily. Prokaryotic type II sub-subfamily. Heterodimer of a large membrane-associated beta subunit and a small pyruvoyl-containing alpha subunit. It depends on pyruvate as a cofactor. In terms of processing, is synthesized initially as an inactive proenzyme. Formation of the active enzyme involves a self-maturation process in which the active site pyruvoyl group is generated from an internal serine residue via an autocatalytic post-translational modification. Two non-identical subunits are generated from the proenzyme in this reaction, and the pyruvate is formed at the N-terminus of the alpha chain, which is derived from the carboxyl end of the proenzyme. The autoendoproteolytic cleavage occurs by a canonical serine protease mechanism, in which the side chain hydroxyl group of the serine supplies its oxygen atom to form the C-terminus of the beta chain, while the remainder of the serine residue undergoes an oxidative deamination to produce ammonia and the pyruvoyl prosthetic group on the alpha chain. During this reaction, the Ser that is part of the protease active site of the proenzyme becomes the pyruvoyl prosthetic group, which constitutes an essential element of the active site of the mature decarboxylase.

It is found in the cell membrane. The enzyme catalyses a 1,2-diacyl-sn-glycero-3-phospho-L-serine + H(+) = a 1,2-diacyl-sn-glycero-3-phosphoethanolamine + CO2. It functions in the pathway phospholipid metabolism; phosphatidylethanolamine biosynthesis; phosphatidylethanolamine from CDP-diacylglycerol: step 2/2. Catalyzes the formation of phosphatidylethanolamine (PtdEtn) from phosphatidylserine (PtdSer). In Clostridium botulinum (strain Alaska E43 / Type E3), this protein is Phosphatidylserine decarboxylase proenzyme.